Here is a 492-residue protein sequence, read N- to C-terminus: Ammonium transporter MEP1 (492 aa).

Residues 1 to 18 (MESRTTGPLTTETYDGPT) lie on the Extracellular side of the membrane. The helical transmembrane segment at 19–39 (VAFMILGAALVFFMVPGLGFL) threads the bilayer. Residues 40–49 (YSGLARRKSA) lie on the Cytoplasmic side of the membrane. Residues 50-70 (LALIWVVLMATLVGILQWYFW) traverse the membrane as a helical segment. Over 71 to 109 (GYSLAFSKSAPNNKFIGNLDSFGFRNVYGKKFDEDAYPE) the chain is Extracellular. A helical membrane pass occupies residues 110–130 (LAYATFQMMFSCVNLSIIAGA). At 131-140 (TAERGRLLPH) the chain is on the cytoplasmic side. Residues 141–161 (MVFLFILATIGYCPVTYWIWS) form a helical membrane-spanning segment. The Extracellular segment spans residues 162 to 174 (PGGWAYQWGVLDW). The chain crosses the membrane as a helical span at residues 175 to 195 (AGGGNIEILSAVSGFVYSWFL). The Cytoplasmic portion of the chain corresponds to 196–210 (GKRNEKLLINFRPHN). The chain crosses the membrane as a helical span at residues 211–231 (VSLVTLGTSILWFGWLLFNSA). Topologically, residues 232–240 (SSLSPNLRS) are extracellular. The helical transmembrane segment at 241–261 (VYAFMNTCLSAITGGMTWCLL) threads the bilayer. Residues 262-268 (DYRSEKK) lie on the Cytoplasmic side of the membrane. A helical transmembrane segment spans residues 269 to 289 (WSTVGLCSGIISGLVAATPSS). Gly290 is a topological domain (extracellular). A helical membrane pass occupies residues 291-311 (CITLYGSLIQGIVAGVVCNFA). The Cytoplasmic portion of the chain corresponds to 312-331 (TKLKYYAKVDDAMDILAEHG). The chain crosses the membrane as a helical span at residues 332 to 352 (VAGVIGLIFNALFGADWVIGM). The Extracellular portion of the chain corresponds to 353–373 (DGTTEHEGGWVTHNYKQMYKQ). A helical transmembrane segment spans residues 374-394 (IAYIAASIGYTAAVTAIICFV). The Cytoplasmic segment spans residues 395-492 (LGYIPGMRLR…PIHQEDPANR (98 aa)). A phosphoserine mark is found at Ser442 and Ser445. The tract at residues 455–492 (HLAAERSSSGTNSSSDGNGEMIQSEKILPIHQEDPANR) is disordered. The span at 461 to 473 (SSSGTNSSSDGNG) shows a compositional bias: low complexity.

It belongs to the ammonia transporter channel (TC 1.A.11.2) family.

The protein localises to the membrane. Its function is as follows. Transporter for ammonium (both charged and uncharged NH3 and NH4) to use as a nitrogen source. Can also transport methylamine. The affinity of MEP1 is about twenty times lower than that of MEP2. MEP3 has the lowest affinity. The chain is Ammonium transporter MEP1 (MEP1) from Saccharomyces cerevisiae (strain ATCC 204508 / S288c) (Baker's yeast).